The sequence spans 864 residues: MYMARCGPKNNVLCFPFQLSFLFSKRLINKRFKYTLQTEDEKNMMGSLSKNKIITPEDVEFKLAQLREFSNTLKERIHNTKSVNSDGHQSNSIAPISEDSRNVNVTKTSSVPNEEKSKNLSDLIHSSFLEKMDHLVPKVIRERVADDDILAKNLFDRSHSNWAPVIDRLYVSEKRFMDIDSREFSVWLNGTVKYLPFHSILHLDEMLLEQINGDVVKFNTHMYECIFNNLGNLKPTNFNQDGTNDKVILKMKELLERYDKALKITEERINKKEGFPSKVPKMTQAILNNCLKYSTKCSSFHDMDYFITKFRDDYGITPNKQNLTTVIQFYSRKEMTKQAWNTFDTMKFLSTKHFPDICTYNTMLRICEKERNFPKALDLFQEIQDHNIKPTTNTYIMMARVLASSSSNAVVSEGKSDSLRLLGWKYLHELEDKNLYRHKKDDLNLFLAMMALAAFDGDIELSRALYYLFIAKKYKTLCANWKGNILVDQDTIWKSTLMPEMLNYLMLAYARFDPRNLPVLSGYEKGIELRRKFLREFDSSMRLDDTDKLVKFKLPFLPISDLNSEAQVLAESNAIWSFNMENGGTRNTLTSSNEAALEDIKKYRQLLDSFAQEAEDFNEFKFKVMYEVTKMQRESINVNVFNKISLHTYLSIPINLKQQKEFLRRLTFFTFQQHEFEAVIKRLYEGYRNIPSSHTRDQNSISTEAISVSKPETTEDLNLIMHDIWYITCLRHKIMMDTTLYELVMKAAIEFQNEDLAKKVWNDRGKFRTTVPFLKMDQRIRIAKDQKFAHLMVEFFTKQGKYSDAIAIILSSKNRFNWTYSMVRNLHKALEEIEDRNSVEILLDVVNKKSHAKALKWEEQELNM.

A mitochondrion-targeting transit peptide spans methionine 1 to arginine 76. Polar residues-rich tracts occupy residues threonine 80–alanine 94 and asparagine 102–proline 112. The segment at threonine 80–serine 117 is disordered. PPR repeat units lie at residues asparagine 319–histidine 353 and aspartate 356–proline 390.

The protein belongs to the CCM1 family. Binds to mitochondrial small subunit 15S rRNA.

The protein resides in the mitochondrion. Its function is as follows. Regulates mitochondrial small subunit maturation by controlling 15S rRNA 5'-end processing. Localizes to the 5' precursor of the 15S rRNA in a position that is subsequently occupied by mS47 in the mature yeast mtSSU. Uses structure and sequence-specific RNA recognition, binding to a single-stranded region of the precursor and specifically recognizing bases -6 to -1. The exchange of Ccm1 for mS47 is coupled to the irreversible removal of precursor rRNA that is accompanied by conformational changes of the mitoribosomal proteins uS5m and mS26. These conformational changes signal completion of 5'-end rRNA processing through protection of the mature 5'-end of the 15S rRNA and stabilization of mS47. The removal of the 5' precursor together with the dissociation of Ccm1 may be catalyzed by the 5'-3' exoribonuclease Pet127. Involved in the specific removal of group I introns in mitochondrial encoded transcripts. The chain is Mitochondrial 15S rRNA processing factor CCM1 from Saccharomyces cerevisiae (strain ATCC 204508 / S288c) (Baker's yeast).